A 640-amino-acid chain; its full sequence is Antigenic protein NP1 (640 aa).

The Peptidase M60 domain maps to 1-288; sequence VQVSIGKCNH…SYVNIAHAFG (288 aa). In terms of domain architecture, PA14 spans 463–615; that stretch reads LDPHQVEYEV…TDQSSVNVSK (153 aa).

This chain is Antigenic protein NP1, found in Entamoeba histolytica.